The sequence spans 166 residues: RNA pyrophosphohydrolase (166 aa).

The region spanning 6-149 is the Nudix hydrolase domain; it reads GFRPNVGIIL…KRDVYRKAMM (144 aa). Positions 38-59 match the Nudix box motif; it reads GGIHFGETPEQALYRELREEVG.

Belongs to the Nudix hydrolase family. RppH subfamily. A divalent metal cation serves as cofactor.

Functionally, accelerates the degradation of transcripts by removing pyrophosphate from the 5'-end of triphosphorylated RNA, leading to a more labile monophosphorylated state that can stimulate subsequent ribonuclease cleavage. The chain is RNA pyrophosphohydrolase from Acinetobacter baylyi (strain ATCC 33305 / BD413 / ADP1).